A 548-amino-acid polypeptide reads, in one-letter code: 2-succinyl-5-enolpyruvyl-6-hydroxy-3-cyclohexene-1-carboxylate synthase (548 aa).

This sequence belongs to the TPP enzyme family. MenD subfamily. As to quaternary structure, homodimer. It depends on Mg(2+) as a cofactor. Requires Mn(2+) as cofactor. Thiamine diphosphate serves as cofactor.

It carries out the reaction isochorismate + 2-oxoglutarate + H(+) = 5-enolpyruvoyl-6-hydroxy-2-succinyl-cyclohex-3-ene-1-carboxylate + CO2. It participates in quinol/quinone metabolism; 1,4-dihydroxy-2-naphthoate biosynthesis; 1,4-dihydroxy-2-naphthoate from chorismate: step 2/7. It functions in the pathway quinol/quinone metabolism; menaquinone biosynthesis. Functionally, catalyzes the thiamine diphosphate-dependent decarboxylation of 2-oxoglutarate and the subsequent addition of the resulting succinic semialdehyde-thiamine pyrophosphate anion to isochorismate to yield 2-succinyl-5-enolpyruvyl-6-hydroxy-3-cyclohexene-1-carboxylate (SEPHCHC). The polypeptide is 2-succinyl-5-enolpyruvyl-6-hydroxy-3-cyclohexene-1-carboxylate synthase (Mycolicibacterium vanbaalenii (strain DSM 7251 / JCM 13017 / BCRC 16820 / KCTC 9966 / NRRL B-24157 / PYR-1) (Mycobacterium vanbaalenii)).